Reading from the N-terminus, the 149-residue chain is D-aminoacyl-tRNA deacylase (149 aa).

The short motif at 137 to 138 is the Gly-cisPro motif, important for rejection of L-amino acids element; the sequence is GP.

It belongs to the DTD family. Homodimer.

It localises to the cytoplasm. The catalysed reaction is glycyl-tRNA(Ala) + H2O = tRNA(Ala) + glycine + H(+). It carries out the reaction a D-aminoacyl-tRNA + H2O = a tRNA + a D-alpha-amino acid + H(+). Functionally, an aminoacyl-tRNA editing enzyme that deacylates mischarged D-aminoacyl-tRNAs. Also deacylates mischarged glycyl-tRNA(Ala), protecting cells against glycine mischarging by AlaRS. Acts via tRNA-based rather than protein-based catalysis; rejects L-amino acids rather than detecting D-amino acids in the active site. By recycling D-aminoacyl-tRNA to D-amino acids and free tRNA molecules, this enzyme counteracts the toxicity associated with the formation of D-aminoacyl-tRNA entities in vivo and helps enforce protein L-homochirality. In Thermosipho africanus (strain TCF52B), this protein is D-aminoacyl-tRNA deacylase.